We begin with the raw amino-acid sequence, 334 residues long: GTP 3',8-cyclase (334 aa).

One can recognise a Radical SAM core domain in the interval 11–236 (GFNRKIDYLR…ESTESSMGPA (226 aa)). Arg-20 contributes to the GTP binding site. Residues Cys-27 and Cys-31 each coordinate [4Fe-4S] cluster. Residue Tyr-33 coordinates S-adenosyl-L-methionine. [4Fe-4S] cluster is bound at residue Cys-34. Position 69 (Arg-69) interacts with GTP. S-adenosyl-L-methionine is bound at residue Gly-73. Residue Thr-100 coordinates GTP. Ser-124 is a binding site for S-adenosyl-L-methionine. Lys-161 is a GTP binding site. Met-195 lines the S-adenosyl-L-methionine pocket. [4Fe-4S] cluster contacts are provided by Cys-260 and Cys-263. A GTP-binding site is contributed by 265 to 267 (RVR). Residue Cys-277 coordinates [4Fe-4S] cluster.

This sequence belongs to the radical SAM superfamily. MoaA family. Monomer and homodimer. [4Fe-4S] cluster serves as cofactor.

The catalysed reaction is GTP + AH2 + S-adenosyl-L-methionine = (8S)-3',8-cyclo-7,8-dihydroguanosine 5'-triphosphate + 5'-deoxyadenosine + L-methionine + A + H(+). Its pathway is cofactor biosynthesis; molybdopterin biosynthesis. Catalyzes the cyclization of GTP to (8S)-3',8-cyclo-7,8-dihydroguanosine 5'-triphosphate. The sequence is that of GTP 3',8-cyclase from Pseudomonas putida (strain ATCC 700007 / DSM 6899 / JCM 31910 / BCRC 17059 / LMG 24140 / F1).